A 455-amino-acid polypeptide reads, in one-letter code: Bifunctional protein GlmU (455 aa).

Residues 1–226 form a pyrophosphorylase region; the sequence is MIAVAILAAG…YQEILGINDR (226 aa). UDP-N-acetyl-alpha-D-glucosamine is bound by residues 7–10, Lys-21, Gln-73, and 78–79; these read LAAG and GT. Asp-103 is a binding site for Mg(2+). Positions 140, 155, 170, and 224 each coordinate UDP-N-acetyl-alpha-D-glucosamine. Asn-224 is a binding site for Mg(2+). A linker region spans residues 227-247; that stretch reads KQLATAYKILQDRIKDDWLVA. Residues 248–455 are N-acetyltransferase; it reads GVTIMDPDSI…RPISSKQTEK (208 aa). 2 residues coordinate UDP-N-acetyl-alpha-D-glucosamine: Arg-329 and Lys-347. His-359 functions as the Proton acceptor in the catalytic mechanism. Positions 362 and 373 each coordinate UDP-N-acetyl-alpha-D-glucosamine. Acetyl-CoA contacts are provided by residues Ala-376, 382–383, Ala-419, and Arg-436; that span reads NY.

This sequence in the N-terminal section; belongs to the N-acetylglucosamine-1-phosphate uridyltransferase family. The protein in the C-terminal section; belongs to the transferase hexapeptide repeat family. In terms of assembly, homotrimer. Requires Mg(2+) as cofactor.

Its subcellular location is the cytoplasm. It carries out the reaction alpha-D-glucosamine 1-phosphate + acetyl-CoA = N-acetyl-alpha-D-glucosamine 1-phosphate + CoA + H(+). It catalyses the reaction N-acetyl-alpha-D-glucosamine 1-phosphate + UTP + H(+) = UDP-N-acetyl-alpha-D-glucosamine + diphosphate. The protein operates within nucleotide-sugar biosynthesis; UDP-N-acetyl-alpha-D-glucosamine biosynthesis; N-acetyl-alpha-D-glucosamine 1-phosphate from alpha-D-glucosamine 6-phosphate (route II): step 2/2. Its pathway is nucleotide-sugar biosynthesis; UDP-N-acetyl-alpha-D-glucosamine biosynthesis; UDP-N-acetyl-alpha-D-glucosamine from N-acetyl-alpha-D-glucosamine 1-phosphate: step 1/1. It functions in the pathway bacterial outer membrane biogenesis; LPS lipid A biosynthesis. Its function is as follows. Catalyzes the last two sequential reactions in the de novo biosynthetic pathway for UDP-N-acetylglucosamine (UDP-GlcNAc). The C-terminal domain catalyzes the transfer of acetyl group from acetyl coenzyme A to glucosamine-1-phosphate (GlcN-1-P) to produce N-acetylglucosamine-1-phosphate (GlcNAc-1-P), which is converted into UDP-GlcNAc by the transfer of uridine 5-monophosphate (from uridine 5-triphosphate), a reaction catalyzed by the N-terminal domain. This Acaryochloris marina (strain MBIC 11017) protein is Bifunctional protein GlmU.